The chain runs to 588 residues: Aspartate--tRNA ligase (588 aa).

E172 is an L-aspartate binding site. The interval 196–199 is aspartate; sequence QLFK. Residue R218 coordinates L-aspartate. ATP contacts are provided by residues 218 to 220 and Q227; that span reads RDE. Residue H449 coordinates L-aspartate. E483 is a binding site for ATP. Position 490 (R490) interacts with L-aspartate. 535–538 contacts ATP; that stretch reads GLDR.

This sequence belongs to the class-II aminoacyl-tRNA synthetase family. Type 1 subfamily. Homodimer.

The protein resides in the cytoplasm. It carries out the reaction tRNA(Asp) + L-aspartate + ATP = L-aspartyl-tRNA(Asp) + AMP + diphosphate. In terms of biological role, catalyzes the attachment of L-aspartate to tRNA(Asp) in a two-step reaction: L-aspartate is first activated by ATP to form Asp-AMP and then transferred to the acceptor end of tRNA(Asp). In Pasteurella multocida (strain Pm70), this protein is Aspartate--tRNA ligase.